The chain runs to 313 residues: Cadmium, cobalt and zinc/H(+)-K(+) antiporter (313 aa).

Residues 1 to 14 lie on the Extracellular side of the membrane; sequence MGHNHNHAGGSNKK. The chain crosses the membrane as a helical span at residues 15–35; that stretch reads VLLISFIMITGYMIIEAIGGF. The Cytoplasmic segment spans residues 36–45; it reads LTNSLALLSD. The chain crosses the membrane as a helical span at residues 46–66; sequence AGHMLSDSISLMVALIAFKLA. Over 67 to 80 the chain is Extracellular; that stretch reads EKKASHHKTFGYKR. The chain crosses the membrane as a helical span at residues 81-101; that stretch reads FEILAAVINGVALILISLYII. Over 102 to 117 the chain is Cytoplasmic; it reads YEAIKRFSHPPEVATT. Residues 118 to 138 traverse the membrane as a helical segment; it reads GMLTISIIGLAVNILVAWIML. Topologically, residues 139–159 are extracellular; it reads NGGDTKNNLNIRGAYLHVISD. A helical membrane pass occupies residues 160–180; that stretch reads MLGSIGAILAAILIIFFGWSW. Topologically, residues 181–313 are cytoplasmic; it reads ADPAASVIVA…TENPRDHHHH (133 aa).

Belongs to the cation diffusion facilitator (CDF) transporter (TC 2.A.4) family. SLC30A subfamily.

Its subcellular location is the cell membrane. Functionally, involved in divalent cation and potassium homeostasis in the cell. Catalyzes the active efflux of zinc, cadmium and cobalt, in exchange for potassium and H(+) ions. The polypeptide is Cadmium, cobalt and zinc/H(+)-K(+) antiporter (czcD) (Bacillus velezensis (strain DSM 23117 / BGSC 10A6 / LMG 26770 / FZB42) (Bacillus amyloliquefaciens subsp. plantarum)).